Consider the following 236-residue polypeptide: RNA-binding protein 24 (236 aa).

The RRM domain maps to 11–88; sequence TKIFVGGLPY…RKANVNLAYL (78 aa). Residues 175–199 are necessary for interaction with EIF4E; sequence QYPYAASPAAAGYVTAGGYGYAVQQ.

In terms of assembly, interacts with EIF4E; this interaction prevents EIF4E from binding to p53/TP53 mRNA and inhibits the assembly of translation initiation complex. (Microbial infection) Interacts with HCV mature core protein; this interaction, which enhances the interaction of Core with 5'-UTR may favor viral replication over translation. As to quaternary structure, (Microbial infection) Interacts with HCV Serine protease/helicase NS3. In terms of tissue distribution, expressed in fetal and adult heart and skeletal muscles.

It localises to the nucleus. The protein resides in the cytoplasm. Functionally, multifunctional RNA-binding protein involved in the regulation of pre-mRNA splicing, mRNA stability and mRNA translation important for cell fate decision and differentiation. Plays a major role in pre-mRNA alternative splicing regulation. Mediates preferentially muscle-specific exon inclusion in numerous mRNAs important for striated cardiac and skeletal muscle cell differentiation. Binds to intronic splicing enhancer (ISE) composed of stretches of GU-rich motifs localized in flanking intron of exon that will be included by alternative splicing. Involved in embryonic stem cell (ESC) transition to cardiac cell differentiation by promoting pre-mRNA alternative splicing events of several pluripotency and/or differentiation genes. Plays a role in the regulation of mRNA stability. Binds to 3'-untranslated region (UTR) AU-rich elements in target transcripts, such as CDKN1A and MYOG, leading to maintain their stabilities. Involved in myogenic differentiation by regulating MYOG levels. Binds to multiple regions in the mRNA 3'-UTR of TP63 isoform 2, hence inducing its destabilization. Also promotes the destabilization of the CHRM2 mRNA via its binding to a region in the coding sequence. Plays a role in the regulation of mRNA translation. Mediates repression of p53/TP53 mRNA translation through its binding to U-rich element in the 3'-UTR, hence preventing EIF4E from binding to p53/TP53 mRNA and translation initiation. Binds to a huge amount of mRNAs. Required for embryonic heart development, sarcomer and M-band formation in striated muscles. Together with RBM20, promotes the expression of short isoforms of PDLIM5/ENH in cardiomyocytes. Its function is as follows. (Microbial infection) Promotes hepatitis C virus (HCV) replication over translation through the inhibition of viral protein expression. Decreases viral translation by linking viral 5'- and 3'-UTRs, blocking 80S ribosome assembly on the viral IRES and enhancing the interaction of the mature core protein and 5'-UTR. In Homo sapiens (Human), this protein is RNA-binding protein 24.